Reading from the N-terminus, the 757-residue chain is MDVNPTLLFLKVPAQNAISTTFPYTGDPPYSHGTGTGYTMDTVNRTHQYSEKGKWTTNTETGAPQLNPIDGPLPEDNEPSGYAQTDCVLEAMAFLEESHPGIFENSCLETMEVVQQTRVDKLTQGRQTYDWTLNRNQPAATALANTIEVFRSNDLTANESGRLIDFLKDVMESMDKEEMEITTHFQRKRRVRDNMTKKMITQRTIGKKKQRLNKRSYLIRALTLNTMTKDAERGKLKRRAIATPGMQIRGFVYFVETLARSICEKLEQSGLPVGGNEKKAKLANVVRKMMTNSQDTELSFTITGDNTKWNENQNPRMFLAMITYITRNQPEWFRNVLSIAPIMFSNKMARLGKGYMFESKSMKLRTQIPAEMLASIDLKYFNESTRKKIEKIRPLLIDGTASLSPGMMMGMFNMLSTVLGVSILNLGQKRYTKTTYWWDGLQSSDDFALIVNAPNHEGIQAGVDRFYRTCKLVGINMSKKKSYINRTGTFEFTSFFYRYGFVANFSMELPSFGVSGINESADMSIGVTVIKNNMINNDLGPATAQMALQLFIKDYRYTYRCHRGDTQIQTRRSFELKRLWEQTRSKAGLLVSDGGPNLYNIRNLHIPEVCLKWELMDEEYQGRLCNPLNPFISHKEIESVNNAVVMPAHGPAKSMEYDAFATTHSWIPKRNRSILNTSQRGILEDEQMYQKCCNLFEKFFPSSSYRRPVGISSMVEAMVSRARIDARIDFESGRIKKEEFAEIMKICSTIEELRRQK.

The segment at 50–82 (SEKGKWTTNTETGAPQLNPIDGPLPEDNEPSGY) is disordered. Positions 55–64 (WTTNTETGAP) are enriched in polar residues. 2 consecutive short sequence motifs (nuclear localization signal) follow at residues 187-195 (RKRRVRDNM) and 203-216 (RTIGKKKQRLNKRS). The tract at residues 249–256 (RGFVYFVE) is promoter-binding site. The RdRp catalytic domain occupies 286-483 (VRKMMTNSQD…GINMSKKKSY (198 aa)).

Belongs to the influenza viruses polymerase PB1 family. Influenza RNA polymerase is composed of three subunits: PB1, PB2 and PA. Interacts (via N-terminus) with PA (via C-terminus). Interacts (via C-terminus) with PB2 (via N-terminus); this interaction is essential for transcription initiation. In terms of processing, phosphorylated by host PRKCA.

Its subcellular location is the host nucleus. It is found in the host cytoplasm. It carries out the reaction RNA(n) + a ribonucleoside 5'-triphosphate = RNA(n+1) + diphosphate. In terms of biological role, RNA-dependent RNA polymerase which is responsible for replication and transcription of virus RNA segments. The transcription of viral mRNAs occurs by a unique mechanism called cap-snatching. 5' methylated caps of cellular mRNAs are cleaved after 10-13 nucleotides by PA. In turn, these short capped RNAs are used as primers by PB1 for transcription of viral mRNAs. During virus replication, PB1 initiates RNA synthesis and copy vRNA into complementary RNA (cRNA) which in turn serves as a template for the production of more vRNAs. The chain is RNA-directed RNA polymerase catalytic subunit from Influenza A virus (strain A/Duck/Germany/1949 H10N7).